We begin with the raw amino-acid sequence, 301 residues long: Mitochondrial import receptor subunit TOM40 homolog (301 aa).

The tract at residues 1–20 (MATPTESEFAAPIPQTNPGS) is disordered.

The protein belongs to the Tom40 family. As to quaternary structure, forms part of the preprotein translocase complex of the outer mitochondrial membrane (TOM complex). Interacts with mitochondrial targeting sequences.

The protein localises to the mitochondrion outer membrane. Functionally, channel-forming protein essential for import of protein precursors into mitochondria. Specifically required for nnt-1 accumulation in the mitochondria and may be involved in the secretion of daf-28/insulin from the mitochondria. Required for embryonic and larval development. The polypeptide is Mitochondrial import receptor subunit TOM40 homolog (Caenorhabditis briggsae).